The sequence spans 928 residues: Echinoderm microtubule-associated protein-like 4 (928 aa).

The microtubule-binding stretch occupies residues M1–D189. Residues A14 to R63 are a coiled coil. Positions S107–S131 are disordered. Residues S116–S131 are compositionally biased toward basic and acidic residues. WD repeat units follow at residues L199 to Y237, T241 to S288, V296 to W336, A343 to W378, R385 to K424, Q442 to H480, E485 to T521, D524 to S563, S567 to A604, V610 to V646, Y653 to I692, R702 to Y760, and A767 to L806. Residues S821–S928 are disordered. The span at Q836 to Q845 shows a compositional bias: polar residues. Over residues D867–N876 the composition is skewed to acidic residues. The span at E877–E898 shows a compositional bias: polar residues.

Belongs to the WD repeat EMAP family. Homotrimer; self-association is mediated by the N-terminal coiled coil.

Its subcellular location is the cytoplasm. It is found in the cytoskeleton. The protein localises to the spindle. The protein resides in the microtubule organizing center. It localises to the midbody. In terms of biological role, essential for the formation and stability of microtubules (MTs). Required for the organization of the mitotic spindle and for the proper attachment of kinetochores to MTs. Promotes the recruitment of NUDC to the mitotic spindle for mitotic progression. The chain is Echinoderm microtubule-associated protein-like 4 (eml4) from Xenopus tropicalis (Western clawed frog).